The following is a 318-amino-acid chain: Ubiquitin-like domain-containing CTD phosphatase 1 (318 aa).

Positions Leu3–Ser81 constitute a Ubiquitin-like domain. The FCP1 homology domain maps to Pro133–Ile294. 3 residues coordinate Mg(2+): Asp143, Asp145, and Asp253.

Mg(2+) is required as a cofactor.

The protein localises to the nucleus. It catalyses the reaction O-phospho-L-seryl-[protein] + H2O = L-seryl-[protein] + phosphate. It carries out the reaction O-phospho-L-threonyl-[protein] + H2O = L-threonyl-[protein] + phosphate. Dephosphorylates 26S nuclear proteasomes, thereby decreasing their proteolytic activity. Recruited to the 19S regulatory particle of the 26S proteasome where it dephosphorylates 19S component PSMC2 which impairs PSMC2 ATPase activity and disrupts 26S proteasome assembly. Has also been reported to stimulate the proteolytic activity of the 26S proteasome. The polypeptide is Ubiquitin-like domain-containing CTD phosphatase 1 (UBLCP1) (Gallus gallus (Chicken)).